The primary structure comprises 618 residues: Proline--tRNA ligase (618 aa).

This sequence belongs to the class-II aminoacyl-tRNA synthetase family. ProS type 1 subfamily. Homodimer.

The protein resides in the cytoplasm. It catalyses the reaction tRNA(Pro) + L-proline + ATP = L-prolyl-tRNA(Pro) + AMP + diphosphate. Catalyzes the attachment of proline to tRNA(Pro) in a two-step reaction: proline is first activated by ATP to form Pro-AMP and then transferred to the acceptor end of tRNA(Pro). As ProRS can inadvertently accommodate and process non-cognate amino acids such as alanine and cysteine, to avoid such errors it has two additional distinct editing activities against alanine. One activity is designated as 'pretransfer' editing and involves the tRNA(Pro)-independent hydrolysis of activated Ala-AMP. The other activity is designated 'posttransfer' editing and involves deacylation of mischarged Ala-tRNA(Pro). The misacylated Cys-tRNA(Pro) is not edited by ProRS. The chain is Proline--tRNA ligase from Streptococcus uberis (strain ATCC BAA-854 / 0140J).